The chain runs to 86 residues: Small ribosomal subunit protein uS17 (86 aa).

The protein belongs to the universal ribosomal protein uS17 family. As to quaternary structure, part of the 30S ribosomal subunit.

One of the primary rRNA binding proteins, it binds specifically to the 5'-end of 16S ribosomal RNA. The sequence is that of Small ribosomal subunit protein uS17 from Marinomonas sp. (strain MWYL1).